We begin with the raw amino-acid sequence, 306 residues long: Ribosomal RNA small subunit methyltransferase H (306 aa).

S-adenosyl-L-methionine contacts are provided by residues 36-38, aspartate 56, phenylalanine 80, aspartate 97, and glutamine 104; that span reads GGH. The disordered stretch occupies residues 280 to 306; the sequence is ASEEEVAGNPRSRSAVMRVAERTGEAA.

Belongs to the methyltransferase superfamily. RsmH family.

The protein resides in the cytoplasm. It catalyses the reaction cytidine(1402) in 16S rRNA + S-adenosyl-L-methionine = N(4)-methylcytidine(1402) in 16S rRNA + S-adenosyl-L-homocysteine + H(+). Specifically methylates the N4 position of cytidine in position 1402 (C1402) of 16S rRNA. This Polaromonas naphthalenivorans (strain CJ2) protein is Ribosomal RNA small subunit methyltransferase H.